Reading from the N-terminus, the 129-residue chain is Small ribosomal subunit protein uS11 (129 aa).

The protein belongs to the universal ribosomal protein uS11 family. Part of the 30S ribosomal subunit. Interacts with proteins S7 and S18. Binds to IF-3.

Its function is as follows. Located on the platform of the 30S subunit, it bridges several disparate RNA helices of the 16S rRNA. Forms part of the Shine-Dalgarno cleft in the 70S ribosome. The sequence is that of Small ribosomal subunit protein uS11 from Rhizobium etli (strain CIAT 652).